We begin with the raw amino-acid sequence, 530 residues long: 2,3-bisphosphoglycerate-independent phosphoglycerate mutase (530 aa).

Mn(2+)-binding residues include Asp15 and Ser65. Ser65 (phosphoserine intermediate) is an active-site residue. Substrate contacts are provided by residues His126, 155–156 (RD), Arg187, Arg193, 257–260 (RPDR), and Lys330. Mn(2+)-binding residues include Asp397, His401, Asp438, His439, and His456.

The protein belongs to the BPG-independent phosphoglycerate mutase family. Monomer. Mn(2+) serves as cofactor.

It carries out the reaction (2R)-2-phosphoglycerate = (2R)-3-phosphoglycerate. The protein operates within carbohydrate degradation; glycolysis; pyruvate from D-glyceraldehyde 3-phosphate: step 3/5. In terms of biological role, catalyzes the interconversion of 2-phosphoglycerate and 3-phosphoglycerate. The protein is 2,3-bisphosphoglycerate-independent phosphoglycerate mutase of Synechococcus sp. (strain JA-2-3B'a(2-13)) (Cyanobacteria bacterium Yellowstone B-Prime).